We begin with the raw amino-acid sequence, 597 residues long: Formate--tetrahydrofolate ligase (597 aa).

An ATP-binding site is contributed by 84–91 (TPLGEGKS).

The protein belongs to the formate--tetrahydrofolate ligase family.

The catalysed reaction is (6S)-5,6,7,8-tetrahydrofolate + formate + ATP = (6R)-10-formyltetrahydrofolate + ADP + phosphate. The protein operates within one-carbon metabolism; tetrahydrofolate interconversion. This is Formate--tetrahydrofolate ligase from Dehalococcoides mccartyi (strain ATCC BAA-2266 / KCTC 15142 / 195) (Dehalococcoides ethenogenes (strain 195)).